A 465-amino-acid polypeptide reads, in one-letter code: Methionine aminopeptidase 2-2 (465 aa).

Residues 1 to 13 (MGSKTPNDHRRGP) show a composition bias toward basic and acidic residues. The segment at 1–92 (MGSKTPNDHR…KKKTLLGGLQ (92 aa)) is disordered. The segment covering 44–55 (GETEDGEDEDDD) has biased composition (acidic residues). Basic residues predominate over residues 71–86 (TKKKNKRKKNKKKKKT). Position 217 (histidine 217) interacts with substrate. 3 residues coordinate a divalent metal cation: aspartate 238, aspartate 249, and histidine 318. Histidine 326 is a binding site for substrate. 2 residues coordinate a divalent metal cation: glutamate 351 and glutamate 446.

The protein belongs to the peptidase M24A family. Methionine aminopeptidase eukaryotic type 2 subfamily. Co(2+) is required as a cofactor. It depends on Zn(2+) as a cofactor. Requires Mn(2+) as cofactor. Fe(2+) serves as cofactor.

The protein localises to the cytoplasm. The catalysed reaction is Release of N-terminal amino acids, preferentially methionine, from peptides and arylamides.. Its function is as follows. Cotranslationally removes the N-terminal methionine from nascent proteins. The N-terminal methionine is often cleaved when the second residue in the primary sequence is small and uncharged (Met-Ala-, Cys, Gly, Pro, Ser, Thr, or Val). The protein is Methionine aminopeptidase 2-2 of Ajellomyces dermatitidis (strain ER-3 / ATCC MYA-2586) (Blastomyces dermatitidis).